Here is a 105-residue protein sequence, read N- to C-terminus: Small ribosomal subunit protein uS10 (105 aa).

Belongs to the universal ribosomal protein uS10 family. Part of the 30S ribosomal subunit.

In terms of biological role, involved in the binding of tRNA to the ribosomes. The sequence is that of Small ribosomal subunit protein uS10 from Chlamydia pneumoniae (Chlamydophila pneumoniae).